The chain runs to 414 residues: Na(+)-translocating NADH-quinone reductase subunit B (414 aa).

A run of 4 helical transmembrane segments spans residues 56–76 (IMIM…YNVG), 82–104 (ALNH…HYWL), 129–149 (FLPI…LFCM), and 164–184 (ILFA…LGIT). The residue at position 236 (Thr236) is an FMN phosphoryl threonine. The next 5 membrane-spanning stretches (helical) occupy residues 275 to 295 (VSTL…IASW), 297 to 317 (IIAG…VIGS), 325 to 345 (MPWH…FMAT), 358 to 378 (WAYG…NPAY), and 381 to 401 (GMML…HIVI).

This sequence belongs to the NqrB/RnfD family. Composed of six subunits; NqrA, NqrB, NqrC, NqrD, NqrE and NqrF. FMN serves as cofactor.

The protein resides in the cell inner membrane. The catalysed reaction is a ubiquinone + n Na(+)(in) + NADH + H(+) = a ubiquinol + n Na(+)(out) + NAD(+). Functionally, NQR complex catalyzes the reduction of ubiquinone-1 to ubiquinol by two successive reactions, coupled with the transport of Na(+) ions from the cytoplasm to the periplasm. NqrA to NqrE are probably involved in the second step, the conversion of ubisemiquinone to ubiquinol. The chain is Na(+)-translocating NADH-quinone reductase subunit B from Vibrio anguillarum (Listonella anguillarum).